A 124-amino-acid chain; its full sequence is UPF0357 protein C1687.07 (124 aa).

The first 24 residues, M1 to A24, serve as a signal peptide directing secretion.

The protein belongs to the UPF0357 family.

In Schizosaccharomyces pombe (strain 972 / ATCC 24843) (Fission yeast), this protein is UPF0357 protein C1687.07.